The following is a 433-amino-acid chain: Serine hydroxymethyltransferase (433 aa).

(6S)-5,6,7,8-tetrahydrofolate is bound by residues Leu132 and 136–138; that span reads GHL. Lys241 carries the post-translational modification N6-(pyridoxal phosphate)lysine.

This sequence belongs to the SHMT family. In terms of assembly, homodimer. Pyridoxal 5'-phosphate serves as cofactor.

The protein resides in the cytoplasm. The catalysed reaction is (6R)-5,10-methylene-5,6,7,8-tetrahydrofolate + glycine + H2O = (6S)-5,6,7,8-tetrahydrofolate + L-serine. It participates in one-carbon metabolism; tetrahydrofolate interconversion. It functions in the pathway amino-acid biosynthesis; glycine biosynthesis; glycine from L-serine: step 1/1. Its function is as follows. Catalyzes the reversible interconversion of serine and glycine with tetrahydrofolate (THF) serving as the one-carbon carrier. This reaction serves as the major source of one-carbon groups required for the biosynthesis of purines, thymidylate, methionine, and other important biomolecules. Also exhibits THF-independent aldolase activity toward beta-hydroxyamino acids, producing glycine and aldehydes, via a retro-aldol mechanism. The chain is Serine hydroxymethyltransferase from Rhodopseudomonas palustris (strain HaA2).